A 161-amino-acid polypeptide reads, in one-letter code: Globin CTT-IX (161 aa).

A signal peptide spans 1–16 (MKFFIVLALCIVGAIA). The 144-residue stretch at 18–161 (PVSSDQANAI…NIFGMIFAHL (144 aa)) folds into the Globin domain. Heme b is bound by residues His-76 and His-111.

It belongs to the globin family. In terms of assembly, homodimer.

This chain is Globin CTT-IX (CTT-9), found in Chironomus thummi thummi (Midge).